A 456-amino-acid chain; its full sequence is UDP-glycosyltransferase 74D1 (456 aa).

Residues S279, 332 to 334 (SPQ), 349 to 357 (HCGWNSTLE), and 371 to 374 (YSDQ) contribute to the UDP-alpha-D-glucose site.

The protein belongs to the UDP-glycosyltransferase family. In terms of tissue distribution, expressed in leaves.

Its function is as follows. Glucosyltransferase that glucosylates jasmonate (JA) and JA derivatives. Also active on indole-3-acetic acid (IAA), 4-coumrate, cinnamate and caffeate. This chain is UDP-glycosyltransferase 74D1 (UGT74D1), found in Arabidopsis thaliana (Mouse-ear cress).